Consider the following 2804-residue polypeptide: Nipped-B-like protein (2804 aa).

2 stretches are compositionally biased toward polar residues: residues 128–173 (LSQN…QNSP) and 191–208 (HPSS…SVSS). The interval 128–340 (LSQNSMHSSP…LGKDEKEQSE (213 aa)) is disordered. Phosphoserine occurs at positions 150 and 162. Residues 234–249 (HHADNPRHGSSEDYLH) are compositionally biased toward basic and acidic residues. Phosphoserine occurs at positions 243, 256, 274, 280, 284, 301, 306, and 318. Basic and acidic residues predominate over residues 331 to 340 (LGKDEKEQSE). Serine 350 carries the phosphoserine modification. Residues 482–500 (RESAIERERFSKEVQDKDK) are compositionally biased toward basic and acidic residues. The interval 482–946 (RESAIERERF…NKAEFPSYLL (465 aa)) is disordered. The span at 523–534 (PASQETGSTGNG) shows a compositional bias: polar residues. Composition is skewed to basic and acidic residues over residues 562–572 (DSIKKPEEIKQ), 593–663 (PENH…ECKQ), 672–685 (KQNE…KPND), and 694–939 (ETTK…DNKA). Phosphothreonine occurs at positions 713 and 746. At serine 912 the chain carries Phosphoserine. The PxVxL motif motif lies at 996–1009 (NKGAKPVVVLQKLS). 2 disordered regions span residues 1017–1047 (IKDR…DQSV) and 1060–1191 (ESTM…LTPE). The residue at position 1082 (lysine 1082) is an N6-acetyllysine. Phosphoserine is present on residues serine 1089, serine 1090, and serine 1096. The segment covering 1089–1100 (SSDEDNDSDEAF) has biased composition (acidic residues). A compositionally biased stretch (basic and acidic residues) spans 1109 to 1139 (KDDDKAWEYEERDRRSSGDHRRSGHSHEGRR). Residues serine 1150, serine 1152, and serine 1154 each carry the phosphoserine modification. Tyrosine 1159 is subject to Phosphotyrosine. Serine 1160 is subject to Phosphoserine. Over residues 1171-1182 (KMKKKEKQKKRK) the composition is skewed to basic residues. Residue threonine 1189 is modified to Phosphothreonine. Phosphoserine is present on serine 1197. Residues 1691–1710 (AMKSQKDEESSEGTHHAKEI) are disordered. 5 HEAT repeats span residues 1767–1805 (AQSF…VDPS), 1843–1881 (PQLA…EQPT), 1945–1984 (YDWF…HILK), 2227–2267 (VNLK…LKEM), and 2313–2351 (LIHP…KYAG). The segment covering 2473 to 2489 (VKDKRKERKSSPSKENE) has biased composition (basic and acidic residues). Disordered regions lie at residues 2473 to 2520 (VKDK…DDIN) and 2651 to 2696 (TSLL…DSTE). A phosphoserine mark is found at serine 2493, serine 2509, serine 2511, serine 2513, serine 2515, serine 2652, and serine 2658. Acidic residues predominate over residues 2510–2519 (DSDSDSEDDI). A Phosphothreonine modification is found at threonine 2667. A Phosphoserine modification is found at serine 2672.

This sequence belongs to the SCC2/Nipped-B family. As to quaternary structure, heterodimerizes with MAU2/SCC4 to form the cohesin loading complex. The NIPBL-MAU2 heterodimer interacts with the cohesin complex composed of SMC1A/B and SMC3 heterodimer, RAD21 and STAG1/SA1. NIPBL directly contacts all members of the complex, RAD21, SMC1A/B, SMC3 and STAG1. Interacts directly (via PxVxL motif) with CBX5. Interacts with ZNF609 (via N-terminus). Interacts with the multiprotein complex Integrator. Interacts (via PxVxL motif) with CBX3. Interacts with BRD4. In terms of tissue distribution, widely expressed. Highly expressed in heart, skeletal muscle, fetal and adult liver, fetal and adult kidney. Expressed at intermediates level in thymus, placenta, peripheral leukocyte and small intestine. Weakly or not expressed in brain, colon, spleen and lung.

Its subcellular location is the nucleus. It is found in the chromosome. In terms of biological role, plays an important role in the loading of the cohesin complex on to DNA. Forms a heterodimeric complex (also known as cohesin loading complex) with MAU2/SCC4 which mediates the loading of the cohesin complex onto chromatin. Plays a role in cohesin loading at sites of DNA damage. Its recruitment to double-strand breaks (DSBs) sites occurs in a CBX3-, RNF8- and RNF168-dependent manner whereas its recruitment to UV irradiation-induced DNA damage sites occurs in a ATM-, ATR-, RNF8- and RNF168-dependent manner. Along with ZNF609, promotes cortical neuron migration during brain development by regulating the transcription of crucial genes in this process. Preferentially binds promoters containing paused RNA polymerase II. Up-regulates the expression of SEMA3A, NRP1, PLXND1 and GABBR2 genes, among others. In Homo sapiens (Human), this protein is Nipped-B-like protein (NIPBL).